The sequence spans 473 residues: Cysteine--tRNA ligase (473 aa).

Residue Cys-30 participates in Zn(2+) binding. The 'HIGH' region signature appears at 32 to 42 (MTVYDYCHIGH). Zn(2+) is bound by residues Cys-213, His-238, and Glu-242. The 'KMSKS' region signature appears at 270-274 (KMSKS). An ATP-binding site is contributed by Lys-273.

Belongs to the class-I aminoacyl-tRNA synthetase family. As to quaternary structure, monomer. It depends on Zn(2+) as a cofactor.

It is found in the cytoplasm. The enzyme catalyses tRNA(Cys) + L-cysteine + ATP = L-cysteinyl-tRNA(Cys) + AMP + diphosphate. The polypeptide is Cysteine--tRNA ligase (Acinetobacter baumannii (strain AB307-0294)).